The sequence spans 147 residues: Deoxyuridine 5'-triphosphate nucleotidohydrolase (147 aa).

Residue R24 coordinates Mg(2+). DUTP contacts are provided by residues 68-70 (PRS), 82-85 (GVID), Y88, G93, I95, and R111.

The protein belongs to the dUTPase family. Requires Mg(2+) as cofactor.

The catalysed reaction is dUTP + H2O = dUMP + diphosphate + H(+). Functionally, this enzyme is involved in nucleotide metabolism: it produces dUMP, the immediate precursor of thymidine nucleotides and it decreases the intracellular concentration of dUTP so that uracil cannot be incorporated into DNA. The chain is Deoxyuridine 5'-triphosphate nucleotidohydrolase (OPG046) from Bos taurus (Bovine).